Consider the following 263-residue polypeptide: Small ribosomal subunit protein uS2 (263 aa).

N-acetylserine is present on S2. Residues 213–223 (NAAEEARAGAT) are compositionally biased toward low complexity. Residues 213-245 (NAAEEARAGATEETEEVVAEAETEWNTETNVED) form a disordered region. The segment covering 224–245 (EETEEVVAEAETEWNTETNVED) has biased composition (acidic residues).

Belongs to the universal ribosomal protein uS2 family. As to quaternary structure, component of the small ribosomal subunit. Mature ribosomes consist of a small (40S) and a large (60S) subunit. The 40S subunit contains about 33 different proteins and 1 molecule of RNA (18S). The 60S subunit contains about 49 different proteins and 3 molecules of RNA (25S, 5.8S and 5S). Interacts with RPS21.

It localises to the cytoplasm. Its function is as follows. Required for the assembly and/or stability of the 40S ribosomal subunit. Required for the processing of the 20S rRNA-precursor to mature 18S rRNA in a late step of the maturation of 40S ribosomal subunits. The chain is Small ribosomal subunit protein uS2 from Clavispora lusitaniae (strain ATCC 42720) (Yeast).